Here is a 570-residue protein sequence, read N- to C-terminus: MKLCPWYIALILLPVCLQSQKLPTRDEELFQMQIRDKALFHDSSVIPDGAEISGYLFRDNPKRYFFVVEEDNTPLSVIVTPCDAPLEWKLTLQELPEEASGEGSGEPEPLEEQKQQIVNEEGTELFSYKGNDVEYFVSSSSPSGLYQLELISTEKDTHFKVYATTTPESDQPYPELPYDPRVDVTSLGRTTVTLAWKPTPTSSVMKQPIQYCVVINKEHNFKSICAVEAKMNADDAFMMVPKPGIDFNPFDFAHFGFQSDNNAGKDRNFMPKASSSKLLRQITTKPKVDIQKVCIGNKNIFTVSDLKPDTQYYFDVFAVNAATNMSTAYVGTFARTKEEAKQKTVELKDGKVTDVFIKRKGTKFLRFSPVSSHQKVTFSVHSCLDAIQIQVRRDGKLLLSHSVEGVRQFQLRGKPKAKYLIRLKGSKKGASMLKILATSKFNKQPFPSLPEDTRIKAFDKLRTCSSVTVAWLGTQERNKFCVYKKEVDDDYTEEHKKREQNQCLGPDTRKKTEKVLCKYFHSQNIHKAVTTETIKGLQPGKSYMLDVYVMGHGGHSVKYQSKIVKTRKFC.

The N-terminal stretch at 1 to 19 (MKLCPWYIALILLPVCLQS) is a signal peptide. Fibronectin type-III domains are found at residues 261–333 (NNAG…VGTF) and 447–566 (PSLP…IVKT). A glycan (N-linked (GlcNAc...) asparagine) is linked at Asn324.

Its subcellular location is the secreted. Functionally, secretory protein that plays a role in various cellular processes. Acts as a chemorepellent acting on gonadotropin-releasing hormone (GnRH) expressing neurons regulating their migration to the hypothalamus. Also promotes neuron migration, growth and survival as well as neurite outgrowth and is involved in the development of the olfactory system. May also act through the regulation of growth factors activity and downstream signaling. Also regulates extracellular matrix assembly and cell adhesiveness. Promotes endothelial cell survival, vessel formation and plays an important role in the process of revascularization through NOS3-dependent mechanisms. The polypeptide is Protein NDNF (ndnf) (Xenopus tropicalis (Western clawed frog)).